The sequence spans 408 residues: Argininosuccinate synthase (408 aa).

ATP is bound by residues 16–24 and A44; that span reads AYSGGLDTS. Y96 and S101 together coordinate L-citrulline. G126 contacts ATP. L-aspartate is bound by residues T128, N132, and D133. N132 contributes to the L-citrulline binding site. R136, S185, S194, E270, and Y282 together coordinate L-citrulline.

Belongs to the argininosuccinate synthase family. Type 1 subfamily. In terms of assembly, homotetramer.

The protein resides in the cytoplasm. It catalyses the reaction L-citrulline + L-aspartate + ATP = 2-(N(omega)-L-arginino)succinate + AMP + diphosphate + H(+). The protein operates within amino-acid biosynthesis; L-arginine biosynthesis; L-arginine from L-ornithine and carbamoyl phosphate: step 2/3. The protein is Argininosuccinate synthase of Shewanella woodyi (strain ATCC 51908 / MS32).